Reading from the N-terminus, the 155-residue chain is 6,7-dimethyl-8-ribityllumazine synthase (155 aa).

5-amino-6-(D-ribitylamino)uracil is bound by residues W22, 56 to 58 (SYE), and 80 to 82 (AVI). 85–86 (DT) serves as a coordination point for (2S)-2-hydroxy-3-oxobutyl phosphate. Catalysis depends on H88, which acts as the Proton donor. F113 contributes to the 5-amino-6-(D-ribitylamino)uracil binding site. R127 serves as a coordination point for (2S)-2-hydroxy-3-oxobutyl phosphate.

This sequence belongs to the DMRL synthase family.

It catalyses the reaction (2S)-2-hydroxy-3-oxobutyl phosphate + 5-amino-6-(D-ribitylamino)uracil = 6,7-dimethyl-8-(1-D-ribityl)lumazine + phosphate + 2 H2O + H(+). It functions in the pathway cofactor biosynthesis; riboflavin biosynthesis; riboflavin from 2-hydroxy-3-oxobutyl phosphate and 5-amino-6-(D-ribitylamino)uracil: step 1/2. Catalyzes the formation of 6,7-dimethyl-8-ribityllumazine by condensation of 5-amino-6-(D-ribitylamino)uracil with 3,4-dihydroxy-2-butanone 4-phosphate. This is the penultimate step in the biosynthesis of riboflavin. The polypeptide is 6,7-dimethyl-8-ribityllumazine synthase (Deinococcus radiodurans (strain ATCC 13939 / DSM 20539 / JCM 16871 / CCUG 27074 / LMG 4051 / NBRC 15346 / NCIMB 9279 / VKM B-1422 / R1)).